The primary structure comprises 482 residues: Catalase (482 aa).

The segment covering 1–23 (MSQNKTLTTASGPPVADNQNSRS) has biased composition (polar residues). Residues 1–28 (MSQNKTLTTASGPPVADNQNSRSAGPRG) form a disordered region. Residues His-55 and Asn-128 contribute to the active site. Tyr-338 is a binding site for heme. Positions 370–395 (SMAFGSNGGAAPNYEPNSYADAPKQA) are disordered.

It belongs to the catalase family. The cofactor is heme.

It catalyses the reaction 2 H2O2 = O2 + 2 H2O. Decomposes hydrogen peroxide into water and oxygen; serves to protect cells from the toxic effects of hydrogen peroxide. This is Catalase (cat) from Onchocerca volvulus endobacterium.